The primary structure comprises 734 residues: Photosystem I P700 chlorophyll a apoprotein A2 (734 aa).

8 helical membrane passes run 46–69, 135–158, 175–199, 273–291, 330–353, 369–395, 417–439, and 517–535; these read IFASHFGQLAIIFLWTSGNLFHVA, LYTGALFLLFLSAISLIAGWLHLQ, LNHHLSGLFGVSSLAWTGHLVHVAI, IAHHHLAIAFIFLVAGHMY, LHFQLGLALASLGVITSLVAQHMY, AALYTHHQYIAGFIMTGAFAHGAIFFI, AIISHLSWASLFLGFHTLGLYVH, and FLVHHAIALGLHTTTLILV. The [4Fe-4S] cluster site is built by C559 and C568. Helical transmembrane passes span 575-596 and 643-665; these read AFYLAVFWMLNTIGWVTFYWHW and LSVWAWMFLFGHLVWATGFMFLI. Chlorophyll a-binding residues include H654, M662, and Y670. W671 lines the phylloquinone pocket. The helical transmembrane segment at 707–727 threads the bilayer; the sequence is LVGLAHFSVGYIFTYAAFLIA.

It belongs to the PsaA/PsaB family. In terms of assembly, the PsaA/B heterodimer binds the P700 chlorophyll special pair and subsequent electron acceptors. PSI consists of a core antenna complex that captures photons, and an electron transfer chain that converts photonic excitation into a charge separation. The eukaryotic PSI reaction center is composed of at least 11 subunits. It depends on P700 is a chlorophyll a/chlorophyll a' dimer, A0 is one or more chlorophyll a, A1 is one or both phylloquinones and FX is a shared 4Fe-4S iron-sulfur center. as a cofactor.

The protein resides in the plastid. It is found in the chloroplast thylakoid membrane. It carries out the reaction reduced [plastocyanin] + hnu + oxidized [2Fe-2S]-[ferredoxin] = oxidized [plastocyanin] + reduced [2Fe-2S]-[ferredoxin]. Functionally, psaA and PsaB bind P700, the primary electron donor of photosystem I (PSI), as well as the electron acceptors A0, A1 and FX. PSI is a plastocyanin-ferredoxin oxidoreductase, converting photonic excitation into a charge separation, which transfers an electron from the donor P700 chlorophyll pair to the spectroscopically characterized acceptors A0, A1, FX, FA and FB in turn. Oxidized P700 is reduced on the lumenal side of the thylakoid membrane by plastocyanin. The polypeptide is Photosystem I P700 chlorophyll a apoprotein A2 (Citrus sinensis (Sweet orange)).